A 441-amino-acid chain; its full sequence is Putative serine/threonine-protein kinase F31E3.2 (441 aa).

Positions 1–16 are enriched in basic residues; the sequence is MGNVATRKRPGCHHHI. A disordered region spans residues 1-41; the sequence is MGNVATRKRPGCHHHIGRNEENLDDDEDGPAKKRLRIGEPQ. Residues 126–381 enclose the Protein kinase domain; sequence FVLERQLGRG…FTVLHAHPFF (256 aa). ATP-binding positions include 132–140 and Lys156; that span reads LGRGSFGVV. Catalysis depends on Asp253, which acts as the Proton acceptor.

It belongs to the protein kinase superfamily. Ser/Thr protein kinase family.

The enzyme catalyses L-seryl-[protein] + ATP = O-phospho-L-seryl-[protein] + ADP + H(+). The catalysed reaction is L-threonyl-[protein] + ATP = O-phospho-L-threonyl-[protein] + ADP + H(+). The chain is Putative serine/threonine-protein kinase F31E3.2 from Caenorhabditis elegans.